The sequence spans 602 residues: uncharacterized protein (602 aa).

Belongs to the glycosyltransferase 2 family.

This is an uncharacterized protein from Rickettsia felis (strain ATCC VR-1525 / URRWXCal2) (Rickettsia azadi).